The chain runs to 895 residues: Eukaryotic translation initiation factor 3 subunit C (895 aa).

The disordered stretch occupies residues 1–108 (MSGFFRKVGD…DSDSEEEVKK (108 aa)). Composition is skewed to acidic residues over residues 11 to 31 (SDSESDISSSEEELSELESGD) and 52 to 75 (DDSDSDDDDSDDDDQDSLDSDDDN). One can recognise a PCI domain in the interval 638–812 (FHMHINLELL…NVVSFHRLEL (175 aa)). Over residues 838–860 (DAKLGEGKEQRSGAGGERGDREG) the composition is skewed to basic and acidic residues. Residues 838 to 895 (DAKLGEGKEQRSGAGGERGDREGGQPGGRRERRGGSAARGRGRGRGRAQQFQALGQKV) form a disordered region. Residues 884-895 (RAQQFQALGQKV) show a composition bias toward low complexity.

It belongs to the eIF-3 subunit C family. Component of the eukaryotic translation initiation factor 3 (eIF-3) complex.

It is found in the cytoplasm. In terms of biological role, component of the eukaryotic translation initiation factor 3 (eIF-3) complex, which is involved in protein synthesis of a specialized repertoire of mRNAs and, together with other initiation factors, stimulates binding of mRNA and methionyl-tRNAi to the 40S ribosome. The eIF-3 complex specifically targets and initiates translation of a subset of mRNAs involved in cell proliferation. In Mycosarcoma maydis (Corn smut fungus), this protein is Eukaryotic translation initiation factor 3 subunit C.